We begin with the raw amino-acid sequence, 439 residues long: GTPase Der (439 aa).

2 consecutive EngA-type G domains span residues 2-166 (SVVA…PAPA) and 176-351 (TRLA…IEFN). GTP-binding positions include 8–15 (GRPNVGKS), 55–59 (DTGGF), 118–121 (NKVD), 182–189 (GRPNVGKS), 229–233 (DTAGI), and 294–297 (NKWD). Residues 352 to 436 (RQVPTGVLNR…PIRLKFKDRN (85 aa)) form the KH-like domain.

It belongs to the TRAFAC class TrmE-Era-EngA-EngB-Septin-like GTPase superfamily. EngA (Der) GTPase family. As to quaternary structure, associates with the 50S ribosomal subunit.

Its function is as follows. GTPase that plays an essential role in the late steps of ribosome biogenesis. This chain is GTPase Der, found in Syntrophotalea carbinolica (strain DSM 2380 / NBRC 103641 / GraBd1) (Pelobacter carbinolicus).